Reading from the N-terminus, the 386-residue chain is O-methyltransferase 10 (386 aa).

Residues serine 207, glycine 231, aspartate 254, aspartate 274, and lysine 288 each coordinate S-adenosyl-L-homocysteine. S-adenosyl-L-methionine is bound at residue aspartate 254. Histidine 292 acts as the Proton acceptor in catalysis.

The protein belongs to the class I-like SAM-binding methyltransferase superfamily. Cation-independent O-methyltransferase family. As to quaternary structure, homodimer.

The catalysed reaction is dopamine + S-adenosyl-L-methionine = 4-methoxytyramine + S-adenosyl-L-homocysteine + H(+). It carries out the reaction 3,4-dihydroxy-5-methoxyphenethylamine + S-adenosyl-L-methionine = 3-hydroxy-4,5-dimethoxyphenethylamine + S-adenosyl-L-homocysteine + H(+). The enzyme catalyses 3-hydroxy-4,5-dimethoxyphenethylamine + S-adenosyl-L-methionine = mescaline + S-adenosyl-L-homocysteine + H(+). It catalyses the reaction 4-hydroxy-3,5-dimethoxyphenethylamine + S-adenosyl-L-methionine = mescaline + S-adenosyl-L-homocysteine + H(+). It functions in the pathway aromatic compound metabolism. It participates in alkaloid biosynthesis. In terms of biological role, O-methyltransferase participating in the biosynthesis of natural products derived from phenylethylamine, including mescaline, a natural hallucinogen potentially used in psychotherapeutic treatments. Catalyzes the O-methylation of mescaline para hydroxyl groups, using dopamine, 3,4-dihydroxy-5-methoxyphenethylamine, 3-hydroxy-4,5-dimethoxyphenethylamine and 4-hydroxy-3,5-dimethoxyphenethylamine as substrates. The sequence is that of O-methyltransferase 10 from Lophophora williamsii (Peyote).